A 259-amino-acid polypeptide reads, in one-letter code: AM-toxin biosynthesis protein 11 (259 aa).

Residues 39-66 (RRSRRRPEEESIQSLSKHVSTTTQPCPT) form a disordered region. Residues 50 to 64 (IQSLSKHVSTTTQPC) show a composition bias toward polar residues.

It participates in mycotoxin biosynthesis. In terms of biological role, part of the gene clusters that mediate the biosynthesis of AM-toxins, host-selective toxins (HSTs) causing Alternaria blotch on apple, a worldwide distributed disease. AM-toxins are cyclic depsipeptides containing the 3 residues 2-hydroxy-isovaleric acid (2-HIV), dehydroalanine, L-alanine which are common for all 3 AM-toxins I to III. The fourth precursor is L-alpha-amino-methoxyphenyl-valeric acid (L-Amv) for AM-toxin I, L-alpha-amino-phenyl-valeric acid (L-Apv) for AM-toxin II, and L-alpha-amino-hydroxyphenyl-valeric acid (L-Ahv) for AM-toxin III. AM-toxins have two target sites for affecting susceptible apple cells; they cause invagination of the plasma membrane and electrolyte loss and chloroplast disorganization. The non-ribosomal peptide synthetase AMT1 contains 4 catalytic modules and is responsible for activation of each residue in AM-toxin. The aldo-keto reductase AMT2 catalyzes the conversion of 2-keto-isovaleric acid (2-KIV) to 2-hydroxy-isovaleric acid (2-HIV), one of the precursor residues incorporated by AMT1 during AM-toxin biosynthesis, by reduction of its ketone to an alcohol. The cytochrome P450 monooxygenase AMT3 and the thioesterase AMT4 are also important for AM-toxin production, but their exact function within the AM-toxin biosynthesis are not known yet. Up to 21 proteins (including AMT1 to AMT4) are predicted to be involved in AM-toxin biosynthesis since their expression ishighly up-regulated in AM-toxin-producing cultures. In Alternaria alternata (Alternaria rot fungus), this protein is AM-toxin biosynthesis protein 11.